Here is a 227-residue protein sequence, read N- to C-terminus: Cytochrome c oxidase subunit 2 (227 aa).

At 1 to 14 (MAHPLQLGLQDASS) the chain is on the mitochondrial intermembrane side. Residues 15–45 (PIMEELLYFHDHALMIVFLISSLVLYTISLM) traverse the membrane as a helical segment. Residues 46 to 59 (LTTKLMHTSTMNAQ) are Mitochondrial matrix-facing. Residues 60-87 (MVETMWTILPAVILTSIALPSLRILYMT) form a helical membrane-spanning segment. The Mitochondrial intermembrane segment spans residues 88 to 227 (DEINNPLLTI…HFETWSTLTS (140 aa)). His-161, Cys-196, Glu-198, Cys-200, His-204, and Met-207 together coordinate Cu cation. A Mg(2+)-binding site is contributed by Glu-198.

The protein belongs to the cytochrome c oxidase subunit 2 family. Component of the cytochrome c oxidase (complex IV, CIV), a multisubunit enzyme composed of 14 subunits. The complex is composed of a catalytic core of 3 subunits MT-CO1, MT-CO2 and MT-CO3, encoded in the mitochondrial DNA, and 11 supernumerary subunits COX4I, COX5A, COX5B, COX6A, COX6B, COX6C, COX7A, COX7B, COX7C, COX8 and NDUFA4, which are encoded in the nuclear genome. The complex exists as a monomer or a dimer and forms supercomplexes (SCs) in the inner mitochondrial membrane with NADH-ubiquinone oxidoreductase (complex I, CI) and ubiquinol-cytochrome c oxidoreductase (cytochrome b-c1 complex, complex III, CIII), resulting in different assemblies (supercomplex SCI(1)III(2)IV(1) and megacomplex MCI(2)III(2)IV(2)). Found in a complex with TMEM177, COA6, COX18, COX20, SCO1 and SCO2. Interacts with TMEM177 in a COX20-dependent manner. Interacts with COX20. Interacts with COX16. Cu cation is required as a cofactor.

The protein resides in the mitochondrion inner membrane. The catalysed reaction is 4 Fe(II)-[cytochrome c] + O2 + 8 H(+)(in) = 4 Fe(III)-[cytochrome c] + 2 H2O + 4 H(+)(out). In terms of biological role, component of the cytochrome c oxidase, the last enzyme in the mitochondrial electron transport chain which drives oxidative phosphorylation. The respiratory chain contains 3 multisubunit complexes succinate dehydrogenase (complex II, CII), ubiquinol-cytochrome c oxidoreductase (cytochrome b-c1 complex, complex III, CIII) and cytochrome c oxidase (complex IV, CIV), that cooperate to transfer electrons derived from NADH and succinate to molecular oxygen, creating an electrochemical gradient over the inner membrane that drives transmembrane transport and the ATP synthase. Cytochrome c oxidase is the component of the respiratory chain that catalyzes the reduction of oxygen to water. Electrons originating from reduced cytochrome c in the intermembrane space (IMS) are transferred via the dinuclear copper A center (CU(A)) of subunit 2 and heme A of subunit 1 to the active site in subunit 1, a binuclear center (BNC) formed by heme A3 and copper B (CU(B)). The BNC reduces molecular oxygen to 2 water molecules using 4 electrons from cytochrome c in the IMS and 4 protons from the mitochondrial matrix. This chain is Cytochrome c oxidase subunit 2 (MT-CO2), found in Galeopterus variegatus (Malayan flying lemur).